Consider the following 246-residue polypeptide: Phosphomannomutase 2 (246 aa).

At Ala2 the chain carries N-acetylalanine. Residue Asp12 is the Nucleophile of the active site. The Mg(2+) site is built by Asp12 and Asp14. The active-site Proton donor/acceptor is Asp14. Residues Arg21, Arg123, Arg134, and Arg141 each contribute to the alpha-D-mannose 1-phosphate site. Position 149 is an N6-acetyllysine (Lys149). Residues Ser179 and Asp181 each contribute to the alpha-D-mannose 1-phosphate site. 4 residues coordinate Mg(2+): Asp209, Phe221, Asp223, and Thr226.

This sequence belongs to the eukaryotic PMM family. Homodimer.

Its subcellular location is the cytoplasm. The enzyme catalyses alpha-D-mannose 1-phosphate = D-mannose 6-phosphate. The protein operates within nucleotide-sugar biosynthesis; GDP-alpha-D-mannose biosynthesis; alpha-D-mannose 1-phosphate from D-fructose 6-phosphate: step 2/2. Its function is as follows. Involved in the synthesis of the GDP-mannose and dolichol-phosphate-mannose required for a number of critical mannosyl transfer reactions. This chain is Phosphomannomutase 2 (PMM2), found in Macaca fascicularis (Crab-eating macaque).